The sequence spans 337 residues: uncharacterized protein (337 aa).

Positions S42–S66 are enriched in low complexity. Positions S42–F68 are disordered. In terms of domain architecture, Exonuclease spans F129–V304. Residues D133, E135, and D234 each contribute to the Mg(2+) site. Residue E135 is the Proton acceptor of the active site. Residue E135 coordinates AMP. The Proton acceptor role is filled by H291. H291 contributes to the AMP binding site. D296 serves as a coordination point for Mg(2+).

This is an uncharacterized protein from Arabidopsis thaliana (Mouse-ear cress).